The primary structure comprises 363 residues: 3-isopropylmalate dehydrogenase (363 aa).

Residue 78–91 (GPKWEHLPPAEQPE) coordinates NAD(+). Arg-99, Arg-109, Arg-138, and Asp-227 together coordinate substrate. The Mg(2+) site is built by Asp-227, Asp-251, and Asp-255. 285 to 297 (GSAPDIAGKNIAN) provides a ligand contact to NAD(+).

Belongs to the isocitrate and isopropylmalate dehydrogenases family. LeuB type 1 subfamily. In terms of assembly, homodimer. It depends on Mg(2+) as a cofactor. Mn(2+) serves as cofactor.

Its subcellular location is the cytoplasm. It carries out the reaction (2R,3S)-3-isopropylmalate + NAD(+) = 4-methyl-2-oxopentanoate + CO2 + NADH. It participates in amino-acid biosynthesis; L-leucine biosynthesis; L-leucine from 3-methyl-2-oxobutanoate: step 3/4. Functionally, catalyzes the oxidation of 3-carboxy-2-hydroxy-4-methylpentanoate (3-isopropylmalate) to 3-carboxy-4-methyl-2-oxopentanoate. The product decarboxylates to 4-methyl-2 oxopentanoate. The protein is 3-isopropylmalate dehydrogenase of Yersinia pestis.